A 368-amino-acid polypeptide reads, in one-letter code: 3-dehydroquinate synthase (368 aa).

NAD(+)-binding positions include 112–116 (GVIGD), 136–137 (TT), lysine 149, lysine 158, and 176–179 (TLIT). Zn(2+) is bound by residues glutamate 191, histidine 256, and histidine 273.

It belongs to the sugar phosphate cyclases superfamily. Dehydroquinate synthase family. The cofactor is Co(2+). Zn(2+) serves as cofactor. NAD(+) is required as a cofactor.

It localises to the cytoplasm. It carries out the reaction 7-phospho-2-dehydro-3-deoxy-D-arabino-heptonate = 3-dehydroquinate + phosphate. The protein operates within metabolic intermediate biosynthesis; chorismate biosynthesis; chorismate from D-erythrose 4-phosphate and phosphoenolpyruvate: step 2/7. In terms of biological role, catalyzes the conversion of 3-deoxy-D-arabino-heptulosonate 7-phosphate (DAHP) to dehydroquinate (DHQ). This Prochlorococcus marinus (strain NATL2A) protein is 3-dehydroquinate synthase.